The chain runs to 62 residues: Temporin-HN1 (62 aa).

The first 22 residues, 1 to 22 (MFTLKKSLLLLLFLGTINLSLS), serve as a signal peptide directing secretion. A propeptide spanning residues 23–44 (EQERNAEEERRDDPEEMDAEVE) is cleaved from the precursor. Residue Leu-60 is modified to Leucine amide.

As to expression, expressed by the skin glands.

The protein localises to the secreted. Its function is as follows. Has antimicrobial activity against some Gram-positive bacteria and fungi but has no activity against a range of Gram-negative bacteria except P.faecalis. Active against the Gram-positive bacteria S.aureus ATCC 25923 (MIC=37.5 uM), S.carnosus KHS (MIC=37.5 uM), B.licheniformis X39 (MIC=19 uM), R.rhodochrous X15 (MIC=4.8 uM), is virtually inactive against E.faecalis 981 (MIC=150 uM) and inactive against E.faecium 091299. Has some antimicrobial activity against the Gram-negative bacterium P.faecalis X29 (MIC=75 uM) and is inactive against E.coli, P.aeruginosa and S.typhi. Has antifungal activity against C.albicans ATCC 2002 (MIC=19 uM) and lower activity against the slime mold 090223 (MIC=75 uM). Has low hemolytic activity against human erythrocytes (LC(50)=75 uM). The sequence is that of Temporin-HN1 from Odorrana hainanensis (Odor frog).